The sequence spans 911 residues: Golgin IMH1 (911 aa).

2 disordered regions span residues 16–41 (LAKG…SGLP) and 271–314 (KELP…ETVD). Residues 101–280 (FFQDLNNKNN…KELPKAISHQ (180 aa)) are a coiled coil. Basic residues predominate over residues 286-299 (NRRKKNRNKGKKNK). Ser-308 and Ser-660 each carry phosphoserine. Coiled-coil stretches lie at residues 312-735 (TVDN…ALKH) and 766-814 (SKAD…KERQ). The segment at 814–850 (QYSDKSGRVSRSGSIGTLANANIDSSPANNSNPTKLE) is disordered. Over residues 822-847 (VSRSGSIGTLANANIDSSPANNSNPT) the composition is skewed to polar residues. Ser-827 is subject to Phosphoserine. Residue Thr-830 is modified to Phosphothreonine. The 49-residue stretch at 861 to 909 (DSEKNEKIAYIKNVLLGFLEHKEQRNQLLPVISMLLQLDSTDEKRLVMS) folds into the GRIP domain.

As to quaternary structure, forms oligomers and is present in high-molecular-mass complexes. Interacts with ARL1.

Its subcellular location is the cytoplasm. The protein localises to the golgi apparatus membrane. Functionally, involved in vesicular transport between an endosomal compartment and the Golgi apparatus. The protein is Golgin IMH1 (IMH1) of Saccharomyces cerevisiae (strain ATCC 204508 / S288c) (Baker's yeast).